Reading from the N-terminus, the 264-residue chain is S-adenosylmethionine decarboxylase proenzyme (264 aa).

The Schiff-base intermediate with substrate; via pyruvic acid role is filled by Ser112. At Ser112 the chain carries Pyruvic acid (Ser); by autocatalysis. His117 acts as the Proton acceptor; for processing activity in catalysis. Cys140 functions as the Proton donor; for catalytic activity in the catalytic mechanism.

It belongs to the prokaryotic AdoMetDC family. Type 2 subfamily. Heterooctamer of four alpha and four beta chains arranged as a tetramer of alpha/beta heterodimers. Requires pyruvate as cofactor. Post-translationally, is synthesized initially as an inactive proenzyme. Formation of the active enzyme involves a self-maturation process in which the active site pyruvoyl group is generated from an internal serine residue via an autocatalytic post-translational modification. Two non-identical subunits are generated from the proenzyme in this reaction, and the pyruvate is formed at the N-terminus of the alpha chain, which is derived from the carboxyl end of the proenzyme. The post-translation cleavage follows an unusual pathway, termed non-hydrolytic serinolysis, in which the side chain hydroxyl group of the serine supplies its oxygen atom to form the C-terminus of the beta chain, while the remainder of the serine residue undergoes an oxidative deamination to produce ammonia and the pyruvoyl group blocking the N-terminus of the alpha chain.

The enzyme catalyses S-adenosyl-L-methionine + H(+) = S-adenosyl 3-(methylsulfanyl)propylamine + CO2. The protein operates within amine and polyamine biosynthesis; S-adenosylmethioninamine biosynthesis; S-adenosylmethioninamine from S-adenosyl-L-methionine: step 1/1. In terms of biological role, catalyzes the decarboxylation of S-adenosylmethionine to S-adenosylmethioninamine (dcAdoMet), the propylamine donor required for the synthesis of the polyamines spermine and spermidine from the diamine putrescine. In Salmonella arizonae (strain ATCC BAA-731 / CDC346-86 / RSK2980), this protein is S-adenosylmethionine decarboxylase proenzyme.